The primary structure comprises 215 residues: RNA pyrophosphohydrolase (215 aa).

The 144-residue stretch at 6–149 (GFRPNVGIIL…KRDVYQLALT (144 aa)) folds into the Nudix hydrolase domain. The Nudix box signature appears at 38–59 (GGIKYGETPMQAMYRELHEETG).

It belongs to the Nudix hydrolase family. RppH subfamily. A divalent metal cation is required as a cofactor.

Functionally, accelerates the degradation of transcripts by removing pyrophosphate from the 5'-end of triphosphorylated RNA, leading to a more labile monophosphorylated state that can stimulate subsequent ribonuclease cleavage. The sequence is that of RNA pyrophosphohydrolase from Burkholderia lata (strain ATCC 17760 / DSM 23089 / LMG 22485 / NCIMB 9086 / R18194 / 383).